A 126-amino-acid chain; its full sequence is Major sperm protein 3 (126 aa).

Ala-2 is modified (N-acetylalanine). One can recognise an MSP domain in the interval 8-125 (DIATMPAQKV…RRKNLPIEYN (118 aa)).

In terms of tissue distribution, sperm.

The protein resides in the cell projection. It is found in the pseudopodium. It localises to the cytoplasm. Its subcellular location is the cytoskeleton. In terms of biological role, central component in molecular interactions underlying sperm crawling. Forms an extensive filament system that extends from sperm villipoda, along the leading edge of the pseudopod. The sequence is that of Major sperm protein 3 (MSP-3) from Globodera rostochiensis (Golden nematode worm).